Here is a 102-residue protein sequence, read N- to C-terminus: Large ribosomal subunit protein bL21 (102 aa).

The protein belongs to the bacterial ribosomal protein bL21 family. In terms of assembly, part of the 50S ribosomal subunit. Contacts protein L20.

Its function is as follows. This protein binds to 23S rRNA in the presence of protein L20. This chain is Large ribosomal subunit protein bL21, found in Cutibacterium acnes (strain DSM 16379 / KPA171202) (Propionibacterium acnes).